Here is a 300-residue protein sequence, read N- to C-terminus: Elongator complex protein 5 (300 aa).

Residue S252 is modified to Phosphoserine. The tract at residues 264-300 (QQALLRPRPGQATSHIFYEPDAYDDLDQEDPDDDLDI) is disordered. Residues 284-300 (DAYDDLDQEDPDDDLDI) show a composition bias toward acidic residues.

It belongs to the ELP5 family. As to quaternary structure, component of the elongator complex which consists of ELP1, ELP2, ELP3, ELP4, ELP5 and ELP6; in the complex, is required for optimal binding of ELP3 to ELP4. Tyrosine-phosphorylated. Ubiquitously expressed with high levels in heart, brain, liver, skeletal muscle and testis.

The protein localises to the nucleus. It is found in the cytoplasm. The protein operates within tRNA modification; 5-methoxycarbonylmethyl-2-thiouridine-tRNA biosynthesis. Its function is as follows. Component of the elongator complex which is required for multiple tRNA modifications, including mcm5U (5-methoxycarbonylmethyl uridine), mcm5s2U (5-methoxycarbonylmethyl-2-thiouridine), and ncm5U (5-carbamoylmethyl uridine). The elongator complex catalyzes formation of carboxymethyluridine in the wobble base at position 34 in tRNAs. Involved in cell migration. This is Elongator complex protein 5 from Homo sapiens (Human).